A 332-amino-acid polypeptide reads, in one-letter code: 2,3-diketo-L-gulonate reductase (332 aa).

Histidine 44 acts as the Proton donor in catalysis. NAD(+)-binding positions include 168 to 174, 224 to 225, and 304 to 306; these read ITMVDMS, WK, and GHE.

Belongs to the LDH2/MDH2 oxidoreductase family. DlgD subfamily. As to quaternary structure, homodimer.

It localises to the cytoplasm. The enzyme catalyses 3-dehydro-L-gulonate + NAD(+) = 2,3-dioxo-L-gulonate + NADH + H(+). The catalysed reaction is 3-dehydro-L-gulonate + NADP(+) = 2,3-dioxo-L-gulonate + NADPH + H(+). Catalyzes the reduction of 2,3-diketo-L-gulonate in the presence of NADH, to form 3-keto-L-gulonate. This is 2,3-diketo-L-gulonate reductase from Escherichia coli O81 (strain ED1a).